The primary structure comprises 289 residues: Early E4 34 kDa protein (289 aa).

Belongs to the adenoviridae E4 30 to 34 kDa protein family. As to quaternary structure, interacts with E1B-55k.

Its subcellular location is the host nucleus. It localises to the host cytoplasm. Plays a major role to prevent cellular inhibition of viral genome replication by nuclear bodies. Assembles an SCF-like E3 ubiquitin ligase complex based on the cellular proteins ELOB, ELOC, CUL5 and RBX1, in cooperation with viral E1B-55K. This viral RING-type ligase ubiquitinates cellular substrates prior to proteasomal degradation: p53/TP53, LIG4, MRE11-RAD50-NBS1 (MRN) complex, ITGA3, DAXX and BLM. The polypeptide is Early E4 34 kDa protein (Human adenovirus F serotype 40 (HAdV-40)).